Here is a 134-residue protein sequence, read N- to C-terminus: Holo-[acyl-carrier-protein] synthase (134 aa).

Aspartate 8 and glutamate 57 together coordinate Mg(2+).

This sequence belongs to the P-Pant transferase superfamily. AcpS family. Requires Mg(2+) as cofactor.

The protein localises to the cytoplasm. It catalyses the reaction apo-[ACP] + CoA = holo-[ACP] + adenosine 3',5'-bisphosphate + H(+). Functionally, transfers the 4'-phosphopantetheine moiety from coenzyme A to a Ser of acyl-carrier-protein. The chain is Holo-[acyl-carrier-protein] synthase from Rhizobium etli (strain ATCC 51251 / DSM 11541 / JCM 21823 / NBRC 15573 / CFN 42).